The sequence spans 299 residues: uncharacterized protein (299 aa).

This is an uncharacterized protein from Archaeoglobus fulgidus (strain ATCC 49558 / DSM 4304 / JCM 9628 / NBRC 100126 / VC-16).